We begin with the raw amino-acid sequence, 467 residues long: Coiled-coil domain-containing protein 71 (467 aa).

Residues 81-105 (PSQTKLQARAPNPTATSPPASAPRT) form a disordered region. Residues 88-105 (ARAPNPTATSPPASAPRT) show a composition bias toward low complexity. At Ser-129 the chain carries Phosphoserine. Disordered stretches follow at residues 211–280 (KLRK…GTKT) and 349–416 (VRAK…KAWL). Residues 253-265 (GHQSKTNRATGSP) show a composition bias toward polar residues. A coiled-coil region spans residues 279–359 (KTAQAKVART…RAKAKVARTQ (81 aa)). Residues 349–380 (VRAKAKVARTQPRGRGRPKGSAKARTTRKGQK) are compositionally biased toward basic residues. Over residues 392–401 (RAEEAKDLPP) the composition is skewed to basic and acidic residues.

This is Coiled-coil domain-containing protein 71 (CCDC71) from Homo sapiens (Human).